The following is a 370-amino-acid chain: Platelet-derived growth factor D (370 aa).

Positions 1 to 23 (MQRLVLVSILLCANFSCYPDTFA) are cleaved as a signal peptide. The 119-residue stretch at 52 to 170 (REENIQVTSN…PGFKIYYSFV (119 aa)) folds into the CUB domain. Residues Cys109 and Cys131 are joined by a disulfide bond. N-linked (GlcNAc...) asparagine glycosylation is present at Asn276. Intrachain disulfides connect Cys302–Cys360 and Cys306–Cys362.

Belongs to the PDGF/VEGF growth factor family. In terms of assembly, homodimer; disulfide-linked. Interacts with PDGFRB homodimers, and with heterodimers formed by PDGFRA and PDGFRB. Activated by proteolytic cleavage. Proteolytic removal of the N-terminal CUB domain releasing the core domain is necessary for unmasking the receptor-binding epitopes of the core domain. Cleavage after Arg-247 or Arg-249 by urokinase plasminogen activator gives rise to the active form. Expressed at high levels in developing heart, lung, kidney and some muscle derivatives. Moderately expressed in liver, brain and testis. In the kidney, localized to glomerular mesangial cells and vascular smooth muscle cells. Up-regulated in areas of renal fibrosis. In mice with unilateral ureteral obstruction, expressed in interstitial cells at day 4, with an increased to maximal expression at day 14.

Its subcellular location is the secreted. In terms of biological role, growth factor that plays an essential role in the regulation of embryonic development, cell proliferation, cell migration, survival and chemotaxis. Potent mitogen for cells of mesenchymal origin. Plays an important role in wound healing. Has oncogenic potential and can induce tumor formation. Induces macrophage recruitment, increased interstitial pressure, and blood vessel maturation during angiogenesis. Can initiate events that lead to a mesangial proliferative glomerulonephritis, including influx of monocytes and macrophages and production of extracellular matrix. The chain is Platelet-derived growth factor D (Pdgfd) from Mus musculus (Mouse).